A 731-amino-acid polypeptide reads, in one-letter code: Catalase-peroxidase 2 (731 aa).

The span at 1–10 (MAETPNSDMS) shows a compositional bias: polar residues. Positions 1–26 (MAETPNSDMSGATGGRSKRPKSNQDW) are disordered. Positions 95–218 (WHSAGTYRTA…LGASVMGLIY (124 aa)) form a cross-link, tryptophyl-tyrosyl-methioninium (Trp-Tyr) (with M-244). His96 serves as the catalytic Proton acceptor. Residues 218-244 (YVNPEGPDGNPDPEASAKNIRQTFDRM) constitute a cross-link (tryptophyl-tyrosyl-methioninium (Tyr-Met) (with W-95)). His259 provides a ligand contact to heme b.

As to quaternary structure, homodimer. The cofactor is heme b. In terms of processing, formation of the three residue Trp-Tyr-Met cross-link is important for the catalase, but not the peroxidase activity of the enzyme.

It catalyses the reaction H2O2 + AH2 = A + 2 H2O. The enzyme catalyses 2 H2O2 = O2 + 2 H2O. Bifunctional enzyme with both catalase and broad-spectrum peroxidase activity. The protein is Catalase-peroxidase 2 of Haloarcula marismortui (strain ATCC 43049 / DSM 3752 / JCM 8966 / VKM B-1809) (Halobacterium marismortui).